A 223-amino-acid chain; its full sequence is N-(5'-phosphoribosyl)anthranilate isomerase (223 aa).

It belongs to the TrpF family.

The enzyme catalyses N-(5-phospho-beta-D-ribosyl)anthranilate = 1-(2-carboxyphenylamino)-1-deoxy-D-ribulose 5-phosphate. It participates in amino-acid biosynthesis; L-tryptophan biosynthesis; L-tryptophan from chorismate: step 3/5. This is N-(5'-phosphoribosyl)anthranilate isomerase from Bradyrhizobium diazoefficiens (strain JCM 10833 / BCRC 13528 / IAM 13628 / NBRC 14792 / USDA 110).